The primary structure comprises 201 residues: MITNNLVPTVIEKTAGGERAFDIYSRLLKERIVFLNGEVNDHSANLVIAQLLFLESEDPDKDIYFYINSPGGMVTAGMGVYDTMQFIKPDVSTICIGLAASMGSLLLAGGAKGKRYSLPSSQIMIHQPLGGFRGQASDIEIHAKNILRIKDRLNKVLAHHTGQDLETIVKDTDRDNFMMADEAKAYGLIDHVIESREAIIK.

The active-site Nucleophile is the Ser-101. His-126 is an active-site residue.

Belongs to the peptidase S14 family. In terms of assembly, fourteen ClpP subunits assemble into 2 heptameric rings which stack back to back to give a disk-like structure with a central cavity, resembling the structure of eukaryotic proteasomes.

It localises to the cytoplasm. The catalysed reaction is Hydrolysis of proteins to small peptides in the presence of ATP and magnesium. alpha-casein is the usual test substrate. In the absence of ATP, only oligopeptides shorter than five residues are hydrolyzed (such as succinyl-Leu-Tyr-|-NHMec, and Leu-Tyr-Leu-|-Tyr-Trp, in which cleavage of the -Tyr-|-Leu- and -Tyr-|-Trp bonds also occurs).. Its function is as follows. Cleaves peptides in various proteins in a process that requires ATP hydrolysis. Has a chymotrypsin-like activity. Plays a major role in the degradation of misfolded proteins. In Francisella tularensis subsp. tularensis (strain FSC 198), this protein is ATP-dependent Clp protease proteolytic subunit.